The chain runs to 77 residues: Anionic peptide 17.1 (77 aa).

The first 24 residues, 1–24, serve as a signal peptide directing secretion; the sequence is MASKTVLVLLLVSVLVSTFCTAKA.

Belongs to the non-disulfide-bridged peptide (NDBP) superfamily. Long chain multifunctional peptide (group 2) family. Expressed by the venom gland.

It localises to the secreted. The polypeptide is Anionic peptide 17.1 (Lychas mucronatus (Chinese swimming scorpion)).